The chain runs to 225 residues: Peptidyl-tRNA hydrolase (225 aa).

Residue Tyr-14 participates in tRNA binding. The active-site Proton acceptor is His-19. 3 residues coordinate tRNA: Phe-64, Asn-66, and Asn-112. Residues 184–225 form a disordered region; the sequence is ALRMQPPKPEKPKPAAKAPEAQAPEAAPDARSALQKLADRFR. Positions 198–210 are enriched in low complexity; it reads AAKAPEAQAPEAA.

Belongs to the PTH family. As to quaternary structure, monomer.

It localises to the cytoplasm. The catalysed reaction is an N-acyl-L-alpha-aminoacyl-tRNA + H2O = an N-acyl-L-amino acid + a tRNA + H(+). Hydrolyzes ribosome-free peptidyl-tRNAs (with 1 or more amino acids incorporated), which drop off the ribosome during protein synthesis, or as a result of ribosome stalling. In terms of biological role, catalyzes the release of premature peptidyl moieties from peptidyl-tRNA molecules trapped in stalled 50S ribosomal subunits, and thus maintains levels of free tRNAs and 50S ribosomes. This chain is Peptidyl-tRNA hydrolase, found in Cereibacter sphaeroides (strain KD131 / KCTC 12085) (Rhodobacter sphaeroides).